The primary structure comprises 228 residues: Sugar fermentation stimulation protein homolog (228 aa).

It belongs to the SfsA family.

The chain is Sugar fermentation stimulation protein homolog from Psychromonas ingrahamii (strain DSM 17664 / CCUG 51855 / 37).